Reading from the N-terminus, the 206-residue chain is Type III pantothenate kinase (206 aa).

5–12 (DIGNSTAK) provides a ligand contact to ATP. Substrate is bound by residues tyrosine 67 and 72-75 (GVDR). Catalysis depends on aspartate 74, which acts as the Proton acceptor. A K(+)-binding site is contributed by aspartate 89. Serine 92 contributes to the ATP binding site. Threonine 144 is a binding site for substrate.

The protein belongs to the type III pantothenate kinase family. As to quaternary structure, homodimer. Requires NH4(+) as cofactor. It depends on K(+) as a cofactor.

The protein resides in the cytoplasm. The enzyme catalyses (R)-pantothenate + ATP = (R)-4'-phosphopantothenate + ADP + H(+). It participates in cofactor biosynthesis; coenzyme A biosynthesis; CoA from (R)-pantothenate: step 1/5. Catalyzes the phosphorylation of pantothenate (Pan), the first step in CoA biosynthesis. The polypeptide is Type III pantothenate kinase (Campylobacter hominis (strain ATCC BAA-381 / DSM 21671 / CCUG 45161 / LMG 19568 / NCTC 13146 / CH001A)).